The chain runs to 282 residues: Bifunctional protein FolD (282 aa).

Residues 164–166, Ile189, and Ile230 contribute to the NADP(+) site; that span reads GAS.

Belongs to the tetrahydrofolate dehydrogenase/cyclohydrolase family. In terms of assembly, homodimer.

The catalysed reaction is (6R)-5,10-methylene-5,6,7,8-tetrahydrofolate + NADP(+) = (6R)-5,10-methenyltetrahydrofolate + NADPH. It catalyses the reaction (6R)-5,10-methenyltetrahydrofolate + H2O = (6R)-10-formyltetrahydrofolate + H(+). The protein operates within one-carbon metabolism; tetrahydrofolate interconversion. Functionally, catalyzes the oxidation of 5,10-methylenetetrahydrofolate to 5,10-methenyltetrahydrofolate and then the hydrolysis of 5,10-methenyltetrahydrofolate to 10-formyltetrahydrofolate. The sequence is that of Bifunctional protein FolD from Campylobacter jejuni subsp. jejuni serotype O:6 (strain 81116 / NCTC 11828).